Here is a 101-residue protein sequence, read N- to C-terminus: Apolipoprotein C-II (101 aa).

The signal sequence occupies residues 1 to 22; that stretch reads MGIRYLLVLVLVLLVLGCEVQG. A lipid binding region spans residues 66–74; that stretch reads TVDEKIREI. Residues 78 to 101 are lipoprotein lipase cofactor; the sequence is STAAVSTYAGIFTDQLLSMLKGDQ.

The protein belongs to the apolipoprotein C2 family. Post-translationally, proapolipoprotein C-II is synthesized as a sialic acid containing glycoprotein which is subsequently desialylated prior to its proteolytic processing. In terms of processing, proapolipoprotein C-II, the major form found in plasma undergoes proteolytic cleavage of its N-terminal hexapeptide to generate apolipoprotein C-II, which occurs as the minor form in plasma.

The protein localises to the secreted. Component of chylomicrons, very low-density lipoproteins (VLDL), low-density lipoproteins (LDL), and high-density lipoproteins (HDL) in plasma. Plays an important role in lipoprotein metabolism as an activator of lipoprotein lipase. Both proapolipoprotein C-II and apolipoprotein C-II can activate lipoprotein lipase. The chain is Apolipoprotein C-II (APOC2) from Mirounga angustirostris (Northern elephant seal).